The sequence spans 319 residues: 2,3,4,5-tetrahydropyridine-2,6-dicarboxylate N-succinyltransferase (319 aa).

Mg(2+)-binding residues include D167 and E184. The Acyl-anhydride intermediate role is filled by E200. Succinyl-CoA contacts are provided by residues R202, G217, S220, A243, 258-259 (EA), and K278.

Belongs to the type 2 tetrahydrodipicolinate N-succinyltransferase family. Homotrimer.

It is found in the cytoplasm. The catalysed reaction is (S)-2,3,4,5-tetrahydrodipicolinate + succinyl-CoA + H2O = (S)-2-succinylamino-6-oxoheptanedioate + CoA. The protein operates within amino-acid biosynthesis; L-lysine biosynthesis via DAP pathway; LL-2,6-diaminopimelate from (S)-tetrahydrodipicolinate (succinylase route): step 1/3. In terms of biological role, catalyzes the conversion of the cyclic tetrahydrodipicolinate (THDP) into the acyclic N-succinyl-L-2-amino-6-oxopimelate using succinyl-CoA. The polypeptide is 2,3,4,5-tetrahydropyridine-2,6-dicarboxylate N-succinyltransferase (Salinispora tropica (strain ATCC BAA-916 / DSM 44818 / JCM 13857 / NBRC 105044 / CNB-440)).